The primary structure comprises 163 residues: T-cell surface glycoprotein CD3 zeta chain (163 aa).

Residues 1-21 form the signal peptide; it reads MKWKALFTAAILQAQLPITEA. The Extracellular portion of the chain corresponds to 22–30; that stretch reads QSFGLLDPK. A helical transmembrane segment spans residues 31–51; sequence LCYLLDGILFIYGVILTALFL. The Cytoplasmic portion of the chain corresponds to 52 to 163; it reads RVKFSRSADA…ALHMQALPPR (112 aa). At serine 58 the chain carries Phosphoserine. ITAM domains are found at residues 61 to 89, 99 to 127, and 130 to 158; these read APAY…LDKR, KPRR…EIGM, and ERRR…LHMQ. 7 positions are modified to phosphotyrosine: tyrosine 64, tyrosine 72, tyrosine 83, tyrosine 110, tyrosine 122, tyrosine 141, and tyrosine 152. The span at 83–98 shows a compositional bias: basic and acidic residues; sequence YDVLDKRRGRDPEMGG. A disordered region spans residues 83–111; sequence YDVLDKRRGRDPEMGGKPRRKNPQEGLYN.

The protein belongs to the CD3Z/FCER1G family. As to quaternary structure, the TCR-CD3 complex is composed of a CD3D/CD3E and a CD3G/CD3E heterodimers that preferentially associate with TCRalpha and TCRbeta, respectively, to form TCRalpha/CD3E/CD3G and TCRbeta/CD3G/CD3E trimers. In turn, the hexamer interacts with CD3Z homodimer to form the TCR-CD3 complex. Alternatively, TCRalpha and TCRbeta can be replaced by TCRgamma and TCRdelta. Interacts with SLA. Interacts with TRAT1. Interacts with DOCK2. Interacts with SLA2. Interacts with SHB. Interacts with ZAP70. Interacts (tyrosine phosphorylated) with SHC1 (via SH2 domain). Interacts with PTPRC. Interacts with CRK; this interaction regulates CD3Z phosphorylation. Interacts (on T cell side) with CD81, ICAM1 and CD9 at immunological synapses between antigen-presenting cells and T cells. Interacts with CD160. Interacts with LY6E. Interacts with LY6E. The signaling subunit of immunoglobulin gamma (IgG) Fc receptor complex. As a homodimer or a heterodimer with FCER1G, associates with the ligand binding subunit FCGR3A (via transmembrane domain); this interaction is a prerequisite for Fc receptor complex expression on the cell surface. Interacts with CD5. In terms of processing, phosphorylated on Tyr residues after T-cell receptor triggering by LCK in association with CD4/CD8.

Its subcellular location is the cell membrane. Part of the TCR-CD3 complex present on T-lymphocyte cell surface that plays an essential role in adaptive immune response. When antigen presenting cells (APCs) activate T-cell receptor (TCR), TCR-mediated signals are transmitted across the cell membrane by the CD3 chains CD3D, CD3E, CD3G and CD3Z. All CD3 chains contain immunoreceptor tyrosine-based activation motifs (ITAMs) in their cytoplasmic domain. Upon TCR engagement, these motifs become phosphorylated by Src family protein tyrosine kinases LCK and FYN, resulting in the activation of downstream signaling pathways. CD3Z ITAMs phosphorylation creates multiple docking sites for the protein kinase ZAP70 leading to ZAP70 phosphorylation and its conversion into a catalytically active enzyme. Plays an important role in intrathymic T-cell differentiation. Additionally, participates in the activity-dependent synapse formation of retinal ganglion cells (RGCs) in both the retina and dorsal lateral geniculate nucleus (dLGN). In Sus scrofa (Pig), this protein is T-cell surface glycoprotein CD3 zeta chain (CD247).